A 196-amino-acid chain; its full sequence is Charged multivesicular body protein 1a (196 aa).

Residues 5–41 adopt a coiled-coil conformation; it reads LFQLKFTAKQLEKLAKKAEKDSNTEQAKVKKALQQKN. Over residues 170-181 the composition is skewed to polar residues; it reads QGASSVGESSTR. The disordered stretch occupies residues 170 to 196; that stretch reads QGASSVGESSTRTQEDQLSRRLASLRN. Residues 185 to 195 carry the MIT-interacting motif motif; it reads DQLSRRLASLR.

It belongs to the SNF7 family. Probable peripherally associated component of the endosomal sorting required for transport complex III (ESCRT-III).

It is found in the cytoplasm. It localises to the endosome membrane. In terms of biological role, probable peripherally associated component of the endosomal sorting required for transport complex III (ESCRT-III) which is involved in multivesicular bodies (MVBs) formation and sorting of endosomal cargo proteins into MVBs. MVBs contain intraluminal vesicles (ILVs) that are generated by invagination and scission from the limiting membrane of the endosome and mostly are delivered to lysosomes enabling degradation of membrane proteins, such as stimulated growth factor receptors, lysosomal enzymes and lipids. This Xenopus laevis (African clawed frog) protein is Charged multivesicular body protein 1a (chmp1a).